The following is a 387-amino-acid chain: Putative gustatory receptor 22d (387 aa).

Over methionine 1–arginine 43 the chain is Cytoplasmic. The helical transmembrane segment at serine 44–lysine 64 threads the bilayer. Residues glutamine 65 to asparagine 82 lie on the Extracellular side of the membrane. The chain crosses the membrane as a helical span at residues alanine 83–valine 103. At histidine 104 to tyrosine 142 the chain is on the cytoplasmic side. The chain crosses the membrane as a helical span at residues valine 143–glycine 163. Over methionine 164 to threonine 184 the chain is Extracellular. A helical transmembrane segment spans residues leucine 185–isoleucine 205. Residues asparagine 206–threonine 252 are Cytoplasmic-facing. The helical transmembrane segment at valine 253–tyrosine 273 threads the bilayer. At arginine 274–serine 281 the chain is on the extracellular side. A helical membrane pass occupies residues phenylalanine 282 to leucine 302. Topologically, residues serine 303–glutamate 363 are cytoplasmic. The chain crosses the membrane as a helical span at residues methionine 364–tyrosine 384. Residues methionine 385 to leucine 387 lie on the Extracellular side of the membrane.

The protein belongs to the insect chemoreceptor superfamily. Gustatory receptor (GR) family. Gr22e subfamily. In terms of tissue distribution, expressed in neurons of the dorsal pharyngeal sense organs of larvae.

Its subcellular location is the cell membrane. Functionally, probable gustatory receptor which mediates acceptance or avoidance behavior, depending on its substrates. The polypeptide is Putative gustatory receptor 22d (Drosophila melanogaster (Fruit fly)).